The sequence spans 194 residues: dITP/XTP pyrophosphatase (194 aa).

11–16 (SHNAGK) contacts substrate. D70 functions as the Proton acceptor in the catalytic mechanism. D70 provides a ligand contact to Mg(2+). Residues S71, 149–152 (FGYD), K172, and 177–178 (HR) contribute to the substrate site.

Belongs to the HAM1 NTPase family. In terms of assembly, homodimer. Mg(2+) is required as a cofactor.

The enzyme catalyses XTP + H2O = XMP + diphosphate + H(+). It carries out the reaction dITP + H2O = dIMP + diphosphate + H(+). The catalysed reaction is ITP + H2O = IMP + diphosphate + H(+). Its function is as follows. Pyrophosphatase that catalyzes the hydrolysis of nucleoside triphosphates to their monophosphate derivatives, with a high preference for the non-canonical purine nucleotides XTP (xanthosine triphosphate), dITP (deoxyinosine triphosphate) and ITP. Seems to function as a house-cleaning enzyme that removes non-canonical purine nucleotides from the nucleotide pool, thus preventing their incorporation into DNA/RNA and avoiding chromosomal lesions. The chain is dITP/XTP pyrophosphatase from Thermosynechococcus vestitus (strain NIES-2133 / IAM M-273 / BP-1).